Reading from the N-terminus, the 413-residue chain is Glutaminase (413 aa).

Positions 23–307 are glutaminase; it reads GELADYIPEL…LSDDMGLHLM (285 aa). S65, N114, E160, N167, Y191, Y243, and V261 together coordinate substrate. In terms of domain architecture, STAS spans 316-413; it reads AVRSITRDGD…SDGTICKERV (98 aa).

It belongs to the glutaminase family. As to quaternary structure, homotetramer.

The catalysed reaction is L-glutamine + H2O = L-glutamate + NH4(+). In Corynebacterium glutamicum (strain ATCC 13032 / DSM 20300 / JCM 1318 / BCRC 11384 / CCUG 27702 / LMG 3730 / NBRC 12168 / NCIMB 10025 / NRRL B-2784 / 534), this protein is Glutaminase (glsA).